The primary structure comprises 498 residues: ATP synthase subunit alpha 1 (498 aa).

164–171 (GNRQSGKT) is a binding site for ATP.

This sequence belongs to the ATPase alpha/beta chains family. In terms of assembly, F-type ATPases have 2 components, CF(1) - the catalytic core - and CF(0) - the membrane proton channel. CF(1) has five subunits: alpha(3), beta(3), gamma(1), delta(1), epsilon(1). CF(0) has three main subunits: a(1), b(2) and c(9-12). The alpha and beta chains form an alternating ring which encloses part of the gamma chain. CF(1) is attached to CF(0) by a central stalk formed by the gamma and epsilon chains, while a peripheral stalk is formed by the delta and b chains.

The protein localises to the cell membrane. The enzyme catalyses ATP + H2O + 4 H(+)(in) = ADP + phosphate + 5 H(+)(out). Its function is as follows. Produces ATP from ADP in the presence of a proton gradient across the membrane. The alpha chain is a regulatory subunit. This Listeria welshimeri serovar 6b (strain ATCC 35897 / DSM 20650 / CCUG 15529 / CIP 8149 / NCTC 11857 / SLCC 5334 / V8) protein is ATP synthase subunit alpha 1.